The chain runs to 225 residues: MAEAKPALEKEAAVKTGSIPSESEDETASHKEGSTSLVSIDEYLAAGVHIGTQQKTQDMMRFVYRVRTDGLYVLDIQSTDERIRVASKLLSHYDPARILVVSSRQYGQHPARMFSRALGTRAMLGRFIPGSLTNPQIHGFFEPDVIIVTDPAGDAQVLKEASSIGVPVVALCDTNNLTSNVDLVIPTNNKGRKALSLVYWLLAREVSRLNDTPFNYELTDFETPL.

The segment covering 1 to 13 (MAEAKPALEKEAA) has biased composition (basic and acidic residues). A disordered region spans residues 1–33 (MAEAKPALEKEAAVKTGSIPSESEDETASHKEG).

Belongs to the universal ribosomal protein uS2 family.

The polypeptide is Small ribosomal subunit protein uS2 (Methanosarcina acetivorans (strain ATCC 35395 / DSM 2834 / JCM 12185 / C2A)).